Here is a 238-residue protein sequence, read N- to C-terminus: Small ribosomal subunit protein uS3 (238 aa).

The KH type-2 domain occupies 39–107; it reads MREFIHDYAK…ELHLNIVEIR (69 aa). Basic and acidic residues predominate over residues 212 to 222; the sequence is PQAHDRRHSEA. The segment at 212 to 238 is disordered; it reads PQAHDRRHSEAQEGAAPRPPRRDRERA.

It belongs to the universal ribosomal protein uS3 family. Part of the 30S ribosomal subunit. Forms a tight complex with proteins S10 and S14.

Its function is as follows. Binds the lower part of the 30S subunit head. Binds mRNA in the 70S ribosome, positioning it for translation. This is Small ribosomal subunit protein uS3 from Cereibacter sphaeroides (strain ATCC 17029 / ATH 2.4.9) (Rhodobacter sphaeroides).